The chain runs to 479 residues: Ammonium transporter Rh type C (479 aa).

At 1 to 9 (MAWNTNLRW) the chain is on the cytoplasmic side. A helical membrane pass occupies residues 10–30 (RLPLTCLLLQVIMVILFGVFV). Residues 31–60 (RYDFEADAHWWSERTHKNLSDMENEFYYRY) are Extracellular-facing. Asn-48 carries N-linked (GlcNAc...) asparagine glycosylation. The chain crosses the membrane as a helical span at residues 61-81 (PSFQDVHVMVFVGFGFLMTFL). Topologically, residues 82 to 85 (QRYG) are cytoplasmic. Residues 86-106 (FSAVGFNFLLAAFGIQWALLM) form a helical membrane-spanning segment. Topologically, residues 107–123 (QGWFHFLQDRYIVVGVE) are extracellular. The chain crosses the membrane as a helical span at residues 124 to 144 (NLINADFCVASVCVAFGAVLG). Residues 145–148 (KVSP) are Cytoplasmic-facing. The helical transmembrane segment at 149–169 (IQLLIMTFFQVTLFAVNEFIL) threads the bilayer. Residues 170–177 (LNLLKVKD) are Extracellular-facing. Residues 178 to 200 (AGGSMTIHTFGAYFGLTVTRILY) form a helical membrane-spanning segment. Over 201-218 (RRNLEQSKERQNSVYQSD) the chain is Cytoplasmic. A helical membrane pass occupies residues 219–239 (LFAMIGTLFLWMYWPSFNSAI). At 240 to 250 (SYHGDSQHRAA) the chain is on the extracellular side. A helical membrane pass occupies residues 251-271 (INTYCSLAACVLTSVAISSAL). Residues 272–281 (HKKGKLDMVH) are Cytoplasmic-facing. A helical membrane pass occupies residues 282 to 302 (IQNATLAGGVAVGTAAEMMLM). Pro-303 is a topological domain (extracellular). A helical membrane pass occupies residues 304-324 (YGALIIGFVCGIISTLGFVYL). Over 325–345 (TPFLESRLHIQDTCGINNLHG) the chain is Cytoplasmic. The chain crosses the membrane as a helical span at residues 346–366 (IPGIIGGIVGAVTAASASLEV). At 367-394 (YGKEGLVHSFDFQGFNGDWTARTQGKFQ) the chain is on the extracellular side. The helical transmembrane segment at 395 to 415 (IYGLLVTLAMALMGGIIVGLI) threads the bilayer. Over 416-479 (LRLPFWGQPS…PMASSVPLVP (64 aa)) the chain is Cytoplasmic.

Belongs to the ammonium transporter (TC 2.A.49) family. Rh subfamily. Homotrimer. In terms of processing, N-glycosylated. Expressed in brain, testis, placenta, pancreas, esophagus and prostate. Expressed in squamous epithelial tissues (at protein level). Expressed in kidney.

It localises to the cell membrane. Its subcellular location is the apical cell membrane. The enzyme catalyses NH4(+)(in) = NH4(+)(out). It carries out the reaction methylamine(out) = methylamine(in). The catalysed reaction is CO2(out) = CO2(in). Its function is as follows. Ammonium transporter involved in the maintenance of acid-base homeostasis. Transports ammonium and its related derivative methylammonium across the plasma membrane of epithelial cells likely contributing to renal transepithelial ammonia transport and ammonia metabolism. Postulated to primarily mediate an electroneutral bidirectional transport of NH3 ammonia species according to a mechanism that implies interaction of an NH4(+) ion with acidic residues of the pore entry followed by dissociation of NH4(+) into NH3 and H(+). As a result NH3 transits through the central pore and is protonated on the extracellular side reforming NH4(+). May act as a CO2 channel providing for renal acid secretion. This is Ammonium transporter Rh type C (RHCG) from Homo sapiens (Human).